A 260-amino-acid polypeptide reads, in one-letter code: Putative ABC transporter ATP-binding protein SCO3161 (260 aa).

Positions 16 to 246 constitute an ABC transporter domain; that stretch reads LDVSGLAFAY…DDLMRAHRLE (231 aa). 49-56 contacts ATP; the sequence is GPNGAGKT.

Belongs to the ABC transporter superfamily.

The protein localises to the cell membrane. Probably part of an ABC transporter complex. Responsible for energy coupling to the transport system. In Streptomyces coelicolor (strain ATCC BAA-471 / A3(2) / M145), this protein is Putative ABC transporter ATP-binding protein SCO3161.